The chain runs to 268 residues: Interferon alpha/beta receptor 2 (268 aa).

The signal sequence occupies residues 1–16 (MGPWTLLLLHLPLVVS). Topologically, residues 17–223 (MLPAPTNVSI…TSPTAANTVP (207 aa)) are extracellular. Fibronectin type-III domains are found at residues 18 to 114 (LPAP…LTDT) and 115 to 217 (LLGP…TSPT). 2 cysteine pairs are disulfide-bonded: Cys-65-Cys-74 and Cys-191-Cys-211. A helical membrane pass occupies residues 224–244 (VVLSVLCAFSLLVVLLCGIVV). The Cytoplasmic portion of the chain corresponds to 245-268 (YSGRLLCMHKPLPKTLSSVPLCGG).

This sequence belongs to the type II cytokine receptor family. Heterodimer with IFNAR1; forming the receptor for type I interferon.

Its subcellular location is the cell membrane. It localises to the cytoplasm. In terms of biological role, together with IFNAR1, forms the heterodimeric receptor for type I interferons (including interferons alpha, beta, epsilon, omega and kappa). Type I interferon binding activates the JAK-STAT signaling cascade, resulting in transcriptional activation or repression of interferon-regulated genes that encode the effectors of the interferon response. Mechanistically, type I interferon-binding brings the IFNAR1 and IFNAR2 subunits into close proximity with one another, driving their associated Janus kinases (JAKs) (TYK2 bound to IFNAR1 and JAK1 bound to IFNAR2) to cross-phosphorylate one another. The activated kinases phosphorylate specific tyrosine residues on the intracellular domains of IFNAR1 and IFNAR2, forming docking sites for the STAT transcription factors (STAT1, STAT2 and STAT). STAT proteins are then phosphorylated by the JAKs, promoting their translocation into the nucleus to regulate expression of interferon-regulated genes. This chain is Interferon alpha/beta receptor 2, found in Oncorhynchus mykiss (Rainbow trout).